The sequence spans 286 residues: 4-hydroxybenzoate octaprenyltransferase (286 aa).

Transmembrane regions (helical) follow at residues 21–40, 95–115, 142–162, 167–187, 211–231, 235–255, and 266–286; these read GTLLLMWPCLMALMLAAGGM, ILFVVLGLSAFGLVLLLNGLV, FLGVVWSWSIPMAYAAQTGEV, WWLFAANWFWTVAYDTMYAMV, IIGLFQIAALVCFIAAGWSAE, LYGLGLLTFVGFSTYQQMLIF, and FLNNNWAGLALFVGLGADYLI.

Belongs to the UbiA prenyltransferase family. Requires Mg(2+) as cofactor.

It localises to the cell inner membrane. It carries out the reaction all-trans-octaprenyl diphosphate + 4-hydroxybenzoate = 4-hydroxy-3-(all-trans-octaprenyl)benzoate + diphosphate. It functions in the pathway cofactor biosynthesis; ubiquinone biosynthesis. Its function is as follows. Catalyzes the prenylation of para-hydroxybenzoate (PHB) with an all-trans polyprenyl group. Mediates the second step in the final reaction sequence of ubiquinone-8 (UQ-8) biosynthesis, which is the condensation of the polyisoprenoid side chain with PHB, generating the first membrane-bound Q intermediate 3-octaprenyl-4-hydroxybenzoate. The protein is 4-hydroxybenzoate octaprenyltransferase of Shewanella putrefaciens (strain CN-32 / ATCC BAA-453).